The chain runs to 177 residues: Small ribosomal subunit protein uS13 (177 aa).

Residues 132–145 show a composition bias toward basic residues; sequence GVRHKRGQKVRGQR. Residues 132–177 form a disordered region; that stretch reads GVRHKRGQKVRGQRTKSTGRTEGTIGVNVEAIKEEQAEDAAAEDDE. The segment covering 167–177 has biased composition (acidic residues); that stretch reads QAEDAAAEDDE.

Belongs to the universal ribosomal protein uS13 family. Part of the 30S ribosomal subunit. Forms a loose heterodimer with protein S19. Forms two bridges to the 50S subunit in the 70S ribosome.

Located at the top of the head of the 30S subunit, it contacts several helices of the 16S rRNA. In the 70S ribosome it contacts the 23S rRNA (bridge B1a) and protein L5 of the 50S subunit (bridge B1b), connecting the 2 subunits; these bridges are implicated in subunit movement. This chain is Small ribosomal subunit protein uS13, found in Haloarcula marismortui (strain ATCC 43049 / DSM 3752 / JCM 8966 / VKM B-1809) (Halobacterium marismortui).